The sequence spans 182 residues: Bifunctional protein PyrR (182 aa).

The short motif at 97 to 109 (VVLVDDVIFRGRT) is the PRPP-binding element.

The protein belongs to the purine/pyrimidine phosphoribosyltransferase family. PyrR subfamily.

The catalysed reaction is UMP + diphosphate = 5-phospho-alpha-D-ribose 1-diphosphate + uracil. Regulates the transcription of the pyrimidine nucleotide (pyr) operon in response to exogenous pyrimidines. In terms of biological role, also displays a weak uracil phosphoribosyltransferase activity which is not physiologically significant. This chain is Bifunctional protein PyrR, found in Synechococcus sp. (strain JA-2-3B'a(2-13)) (Cyanobacteria bacterium Yellowstone B-Prime).